Reading from the N-terminus, the 763-residue chain is MAGFDWFWKALGGKSGRNQKRSVAIVNQVENHAAELDALDDVALAQRAKDLASGGRIDNHAEFLAILGVASQRTLGLKPYPVQSQAVLRLIEGDVVHMATGEGKTLVGAMAATGLGLMGKRVHSITVNDYLAVRDAEWMRPLVEFFGLSVASISEKMDAGERRQAYKAAIVYGPVNEIGFDVLRDQLITRREDAVQHGADVAIIDEADSVLVDEALVPLVLAGNQPGHAPRGKITDVVRSLKENDDYTIDDDRRNVFLTDKGAAKLEQQLGISSLYDDEHVGSTLVQVNLALHAQALLIRDIHYIVRDSKVLLIDASRGRVADLQRWPDGLQAAVEAKEGLAVSEGGKILDTITLQALIGRYPMACGMTGTAVEATDQLRTFYDLHVSVIERNHPLKRFDEADRIYATMAEKNRAIIDEIALLHSTGQPVLVGTHDVAESEELATALRELNIEVSVLNAKNDAEEAQIIAEAGDIGRVTVSTQMAGRGTDIRLGGADEADYDEVVKLGGLAVIGTARHRSQRLDNQLRGRAGRQGDPGLSLFFVSLDDDVVVSGGSGESVSAQPDATGLIDSDRIRDWVGHCQRVTEGQLLEIHSQSWNYNKLLADQRVIIDERRERLLDTALAWEELAQHAPARAAELEDLDQSVREQAARDIMLYHLDYNWSEHLALMDDVRESIHLRAIARETPLDEYHRIAVREFKDLAQRAVDDAVSTFKSVTIDHEGAHLDDEGLARPSATWTYMVSDNPLAGSGNSVISGIGNIFR.

Residues Gln-83, 101–105, and Asp-490 contribute to the ATP site; that span reads GEGKT.

It belongs to the SecA family. As to quaternary structure, monomer and homodimer. Part of the essential Sec protein translocation apparatus which comprises SecA, SecYEG and auxiliary proteins SecDF. Other proteins may also be involved.

The protein resides in the cell membrane. The protein localises to the cytoplasm. It carries out the reaction ATP + H2O + cellular proteinSide 1 = ADP + phosphate + cellular proteinSide 2.. Its function is as follows. Part of the Sec protein translocase complex. Interacts with the SecYEG preprotein conducting channel. Has a central role in coupling the hydrolysis of ATP to the transfer of proteins into and across the cell membrane, serving as an ATP-driven molecular motor driving the stepwise translocation of polypeptide chains across the membrane. The protein is Protein translocase subunit SecA 2 of Corynebacterium glutamicum (strain ATCC 13032 / DSM 20300 / JCM 1318 / BCRC 11384 / CCUG 27702 / LMG 3730 / NBRC 12168 / NCIMB 10025 / NRRL B-2784 / 534).